We begin with the raw amino-acid sequence, 231 residues long: 5'-methylthioadenosine/S-adenosylhomocysteine nucleosidase (231 aa).

Glu12 acts as the Proton acceptor in catalysis. Residues Gly78, Met153, and 174–175 (ME) contribute to the substrate site. Catalysis depends on Asp198, which acts as the Proton donor.

The protein belongs to the PNP/UDP phosphorylase family. MtnN subfamily.

It carries out the reaction S-adenosyl-L-homocysteine + H2O = S-(5-deoxy-D-ribos-5-yl)-L-homocysteine + adenine. The enzyme catalyses S-methyl-5'-thioadenosine + H2O = 5-(methylsulfanyl)-D-ribose + adenine. The catalysed reaction is 5'-deoxyadenosine + H2O = 5-deoxy-D-ribose + adenine. Its pathway is amino-acid biosynthesis; L-methionine biosynthesis via salvage pathway; S-methyl-5-thio-alpha-D-ribose 1-phosphate from S-methyl-5'-thioadenosine (hydrolase route): step 1/2. In terms of biological role, catalyzes the irreversible cleavage of the glycosidic bond in both 5'-methylthioadenosine (MTA) and S-adenosylhomocysteine (SAH/AdoHcy) to adenine and the corresponding thioribose, 5'-methylthioribose and S-ribosylhomocysteine, respectively. Also cleaves 5'-deoxyadenosine, a toxic by-product of radical S-adenosylmethionine (SAM) enzymes, into 5-deoxyribose and adenine. The chain is 5'-methylthioadenosine/S-adenosylhomocysteine nucleosidase from Bacillus subtilis (strain 168).